The following is a 562-amino-acid chain: DNA-binding protein MutS2 (562 aa).

380 to 387 is a binding site for ATP; the sequence is GANSGGKT.

The protein belongs to the DNA mismatch repair MutS family. Archaeal Muts2 subfamily. As to quaternary structure, multimer. It depends on Co(2+) as a cofactor. The cofactor is Mn(2+).

Functionally, has ATPase and non-specific DNA-binding activities. May be involved in recombination and/or recombinational repair. Not involved in mismatch repair. The sequence is that of DNA-binding protein MutS2 from Pyrococcus furiosus (strain ATCC 43587 / DSM 3638 / JCM 8422 / Vc1).